The chain runs to 242 residues: tRNA (guanine-N(1)-)-methyltransferase (242 aa).

S-adenosyl-L-methionine-binding positions include Gly115 and Leu134 to Leu139. Basic and acidic residues predominate over residues Gln210–Leu224. Positions Gln210–Ala242 are disordered.

The protein belongs to the RNA methyltransferase TrmD family. As to quaternary structure, homodimer.

Its subcellular location is the cytoplasm. It carries out the reaction guanosine(37) in tRNA + S-adenosyl-L-methionine = N(1)-methylguanosine(37) in tRNA + S-adenosyl-L-homocysteine + H(+). In terms of biological role, specifically methylates guanosine-37 in various tRNAs. The polypeptide is tRNA (guanine-N(1)-)-methyltransferase (Synechococcus sp. (strain WH7803)).